The chain runs to 74 residues: Probable tetrachloroethene reductive dehalogenase membrane anchor protein (74 aa).

The next 2 helical transmembrane spans lie at 11-31 (ALGL…ISMG) and 40-60 (AGSI…FLLM).

The protein belongs to the PceB family.

It is found in the cell inner membrane. Functionally, may act as a membrane anchor for the tetrachloroethene reductive dehalogenase PceA. The protein is Probable tetrachloroethene reductive dehalogenase membrane anchor protein of Sulfurospirillum multivorans (Dehalospirillum multivorans).